Reading from the N-terminus, the 531-residue chain is Peroxinectin A (531 aa).

The first 21 residues, 1–21, serve as a signal peptide directing secretion; it reads MRLNLISFFIIFTILVSISNS. N-linked (GlcNAc...) asparagine glycosylation occurs at Asn-62. The active-site Proton acceptor is the His-101. Asn-131 and Asn-338 each carry an N-linked (GlcNAc...) asparagine glycan.

Belongs to the peroxidase family.

The protein localises to the secreted. It catalyses the reaction 2 a phenolic donor + H2O2 = 2 a phenolic radical donor + 2 H2O. This Dictyostelium discoideum (Social amoeba) protein is Peroxinectin A (poxA).